Consider the following 103-residue polypeptide: G0/G1 switch protein 2 (103 aa).

In terms of assembly, directly interacts with BCL2; this interaction prevents the formation of the anti-apoptotic BAX-BCL2 complex.

It is found in the mitochondrion. Its function is as follows. Promotes apoptosis by binding to BCL2, hence preventing the formation of protective BCL2-BAX heterodimers. In Rattus norvegicus (Rat), this protein is G0/G1 switch protein 2 (G0s2).